A 447-amino-acid polypeptide reads, in one-letter code: SNF1-related protein kinase regulatory subunit gamma-1-like (447 aa).

N-acetylalanine is present on Ala2. Phosphoserine is present on Ser35. CBS domains lie at 54-120 (QVPG…SAEL), 214-275 (SFRW…GRDW), 292-350 (MSPN…PEVF), and 374-433 (LAIP…PNYF).

This sequence belongs to the 5'-AMP-activated protein kinase gamma subunit family. As to quaternary structure, subunit of a probable heterotrimeric complex consisting of an alpha catalytic (KIN10 or KIN11) subunit, and a beta (KINB) and a gamma (KING or SNF4) non-catalytic regulatory subunits.

Its function is as follows. Regulatory subunit of the probable trimeric SNF1-related protein kinase (SnRK) complex, which may play a role in a signal transduction cascade regulating gene expression and carbohydrate metabolism in higher plants. This is SNF1-related protein kinase regulatory subunit gamma-1-like (CBSCBS2) from Arabidopsis thaliana (Mouse-ear cress).